The sequence spans 485 residues: UDP-N-acetylmuramoyl-L-alanyl-D-glutamate--2,6-diaminopimelate ligase (485 aa).

Ser-30 provides a ligand contact to UDP-N-acetyl-alpha-D-muramoyl-L-alanyl-D-glutamate. Position 113–119 (113–119 (GTNGKTT)) interacts with ATP. Residues 155–156 (TT), Ser-182, and Arg-190 each bind UDP-N-acetyl-alpha-D-muramoyl-L-alanyl-D-glutamate. The residue at position 222 (Lys-222) is an N6-carboxylysine. Meso-2,6-diaminopimelate-binding positions include Arg-381, 405–408 (DNPR), Gly-455, and Glu-459. The short motif at 405 to 408 (DNPR) is the Meso-diaminopimelate recognition motif element.

This sequence belongs to the MurCDEF family. MurE subfamily. Mg(2+) is required as a cofactor. In terms of processing, carboxylation is probably crucial for Mg(2+) binding and, consequently, for the gamma-phosphate positioning of ATP.

The protein localises to the cytoplasm. The catalysed reaction is UDP-N-acetyl-alpha-D-muramoyl-L-alanyl-D-glutamate + meso-2,6-diaminopimelate + ATP = UDP-N-acetyl-alpha-D-muramoyl-L-alanyl-gamma-D-glutamyl-meso-2,6-diaminopimelate + ADP + phosphate + H(+). It functions in the pathway cell wall biogenesis; peptidoglycan biosynthesis. Catalyzes the addition of meso-diaminopimelic acid to the nucleotide precursor UDP-N-acetylmuramoyl-L-alanyl-D-glutamate (UMAG) in the biosynthesis of bacterial cell-wall peptidoglycan. The sequence is that of UDP-N-acetylmuramoyl-L-alanyl-D-glutamate--2,6-diaminopimelate ligase from Clostridium tetani (strain Massachusetts / E88).